The primary structure comprises 251 residues: Hydroxypyruvate/pyruvate aldolase (251 aa).

His-44 acts as the Proton acceptor in catalysis. Arg-69 serves as a coordination point for 3-hydroxypyruvate. Glu-145 is a binding site for Mg(2+). Residues Thr-170 and Asp-171 each coordinate 3-hydroxypyruvate. Asp-171 provides a ligand contact to Mg(2+).

The protein belongs to the HpcH/HpaI aldolase family. Homohexamer. Trimer of homodimers. It depends on Mn(2+) as a cofactor. Mg(2+) serves as cofactor. The cofactor is Co(2+). Zn(2+) is required as a cofactor.

It catalyses the reaction D-glyceraldehyde + 3-hydroxypyruvate = 2-dehydro-D-galactonate. It carries out the reaction D-glyceraldehyde + pyruvate = 2-dehydro-3-deoxy-L-galactonate. The catalysed reaction is L-glyceraldehyde + 3-hydroxypyruvate = (3S,4S,5S)-3,4,5,6-tetrahydroxy-2-oxohexanoate. The enzyme catalyses (R)-lactaldehyde + 3-hydroxypyruvate = (3S,4S,5R)-3,4,5-trihydroxy-2-oxohexanoate. It catalyses the reaction (R)-lactaldehyde + 3-hydroxypyruvate = (3S,4R,5R)-3,4,5-trihydroxy-2-oxohexanoate. It carries out the reaction (S)-lactaldehyde + 3-hydroxypyruvate = (3S,4S,5S)-3,4,5-trihydroxy-2-oxohexanoate. The catalysed reaction is D-erythrose + 3-hydroxypyruvate = (3S,4S,5R,6R)-3,4,5,6,7-pentahydroxy-2-oxoheptanoate. Binding of substrate induces a dynamic movement of the metal cofactor between an inactive coordination sphere to a catalytically active one. When oxaloacetate is used as substrate, activity is increased in the presence of micromolar concentrations of inorganic phosphate. The phosphate does not improve the binding of the substrate, but exclusively increases its rate of decarboxylation. Excessive phosphate concentrations negatively affect the reaction rate by removing the metal cofactor. Functionally, aldolase which can catalyze in vitro the aldolisation reaction between hydroxypyruvate (HPA) or pyruvate (PA) and D-glyceraldehyde (D-GA). The condensation of hydroxypyruvate and D-glyceraldehyde produces 2-dehydro-D-galactonate as the major product. The condensation of pyruvate and D-glyceraldehyde produces 2-dehydro-3-deoxy-L-galactonate. Can use other electrophilic substrates such as L-glyceraldehyde, D- and L-lactaldehyde and D-erythrose. Also catalyzes the retro-aldol type decarboxylation of oxaloacetate, a general property of known pyruvate aldolases. The protein is Hydroxypyruvate/pyruvate aldolase of Rhizorhabdus wittichii (strain DSM 6014 / CCUG 31198 / JCM 15750 / NBRC 105917 / EY 4224 / RW1) (Sphingomonas wittichii).